The chain runs to 178 residues: Beta-lactoglobulin-1A/1C (178 aa).

An N-terminal signal peptide occupies residues 1 to 18 (MRCLLLTLGLALLCGVQA). Cystine bridges form between C84-C176 and C124-C137.

This sequence belongs to the calycin superfamily. Lipocalin family. Under physiological conditions beta-lactoglobulin exists as an equilibrium mixture of monomeric and dimeric forms.

Its subcellular location is the secreted. Its function is as follows. Lactoglobulin is the primary component of whey, it binds retinol and is probably involved in the transport of that molecule. The sequence is that of Beta-lactoglobulin-1A/1C from Sus scrofa (Pig).